The following is a 186-amino-acid chain: MNDSGVSKIYASALLGAVNSPEEVEQELGDLVQLLFKEEKIRNFFLSPTVSIEEKENILEKNLRGKILDVTLNFLGVLLNKGRFINLPEIQKRFTVELDKKKGRVRAQIKSYPSLEPAQITKLGSILSEKFKSEFILEVSEDKTLLGGFVVQFNDLKIEKSIASQLGEIKKAMLEKKLPVGAVYEN.

The protein belongs to the ATPase delta chain family. As to quaternary structure, F-type ATPases have 2 components, F(1) - the catalytic core - and F(0) - the membrane proton channel. F(1) has five subunits: alpha(3), beta(3), gamma(1), delta(1), epsilon(1). F(0) has three main subunits: a(1), b(2) and c(10-14). The alpha and beta chains form an alternating ring which encloses part of the gamma chain. F(1) is attached to F(0) by a central stalk formed by the gamma and epsilon chains, while a peripheral stalk is formed by the delta and b chains.

It is found in the cell inner membrane. F(1)F(0) ATP synthase produces ATP from ADP in the presence of a proton or sodium gradient. F-type ATPases consist of two structural domains, F(1) containing the extramembraneous catalytic core and F(0) containing the membrane proton channel, linked together by a central stalk and a peripheral stalk. During catalysis, ATP synthesis in the catalytic domain of F(1) is coupled via a rotary mechanism of the central stalk subunits to proton translocation. Its function is as follows. This protein is part of the stalk that links CF(0) to CF(1). It either transmits conformational changes from CF(0) to CF(1) or is implicated in proton conduction. The sequence is that of ATP synthase subunit delta from Leptospira borgpetersenii serovar Hardjo-bovis (strain JB197).